Reading from the N-terminus, the 295-residue chain is N-acetylmuramic acid 6-phosphate etherase (295 aa).

The region spanning 55–218 is the SIS domain; the sequence is AADALKQGGR…STGAMVKLGK (164 aa). Catalysis depends on glutamate 83, which acts as the Proton donor. Residue glutamate 114 is part of the active site.

Belongs to the GCKR-like family. MurNAc-6-P etherase subfamily. In terms of assembly, homodimer.

The catalysed reaction is N-acetyl-D-muramate 6-phosphate + H2O = N-acetyl-D-glucosamine 6-phosphate + (R)-lactate. It functions in the pathway amino-sugar metabolism; 1,6-anhydro-N-acetylmuramate degradation. The protein operates within amino-sugar metabolism; N-acetylmuramate degradation. It participates in cell wall biogenesis; peptidoglycan recycling. Specifically catalyzes the cleavage of the D-lactyl ether substituent of MurNAc 6-phosphate, producing GlcNAc 6-phosphate and D-lactate. Together with AnmK, is also required for the utilization of anhydro-N-acetylmuramic acid (anhMurNAc) either imported from the medium or derived from its own cell wall murein, and thus plays a role in cell wall recycling. This chain is N-acetylmuramic acid 6-phosphate etherase, found in Yersinia pseudotuberculosis serotype O:1b (strain IP 31758).